Consider the following 215-residue polypeptide: Large ribosomal subunit protein uL3 (215 aa).

The residue at position 153 (Gln153) is an N5-methylglutamine.

The protein belongs to the universal ribosomal protein uL3 family. In terms of assembly, part of the 50S ribosomal subunit. Forms a cluster with proteins L14 and L19. In terms of processing, methylated by PrmB.

Functionally, one of the primary rRNA binding proteins, it binds directly near the 3'-end of the 23S rRNA, where it nucleates assembly of the 50S subunit. The sequence is that of Large ribosomal subunit protein uL3 from Nitrosococcus oceani (strain ATCC 19707 / BCRC 17464 / JCM 30415 / NCIMB 11848 / C-107).